The primary structure comprises 729 residues: Carbon monoxide dehydrogenase/acetyl-CoA synthase subunit alpha (729 aa).

[4Fe-4S] cluster-binding residues include C506, C509, C518, and C528. C509 provides a ligand contact to Ni(2+). Ni(2+)-binding residues include C595, G596, and C597.

As to quaternary structure, tetramer of two alpha and two beta chains. Ni cation serves as cofactor. Requires [4Fe-4S] cluster as cofactor.

It carries out the reaction Co(I)-[corrinoid Fe-S protein] + acetyl-CoA + H(+) = methyl-Co(III)-[corrinoid Fe-S protein] + CO + CoA. The beta subunit generates CO from CO(2), while the alpha subunit (this protein) combines the CO with CoA and a methyl group to form acetyl-CoA. The methyl group, which is incorporated into acetyl-CoA, is transferred to the alpha subunit by a corrinoid iron-sulfur protein. This chain is Carbon monoxide dehydrogenase/acetyl-CoA synthase subunit alpha, found in Moorella thermoacetica (Clostridium thermoaceticum).